Here is a 246-residue protein sequence, read N- to C-terminus: Uridylate kinase (246 aa).

10-13 (KLSG) is a binding site for ATP. Gly-52 contacts UMP. ATP-binding residues include Gly-53 and Arg-57. Residues Asp-72 and 133–140 (TGNPFFTT) each bind UMP. Residues Thr-160, Tyr-166, and Asp-169 each contribute to the ATP site.

The protein belongs to the UMP kinase family. Homohexamer.

The protein localises to the cytoplasm. The catalysed reaction is UMP + ATP = UDP + ADP. Its pathway is pyrimidine metabolism; CTP biosynthesis via de novo pathway; UDP from UMP (UMPK route): step 1/1. Its activity is regulated as follows. Inhibited by UTP. Functionally, catalyzes the reversible phosphorylation of UMP to UDP. The protein is Uridylate kinase of Halorhodospira halophila (strain DSM 244 / SL1) (Ectothiorhodospira halophila (strain DSM 244 / SL1)).